The primary structure comprises 125 residues: Holo-[acyl-carrier-protein] synthase (125 aa).

Mg(2+) is bound by residues Asp-7 and Glu-56.

Belongs to the P-Pant transferase superfamily. AcpS family. Mg(2+) is required as a cofactor.

The protein localises to the cytoplasm. It carries out the reaction apo-[ACP] + CoA = holo-[ACP] + adenosine 3',5'-bisphosphate + H(+). Functionally, transfers the 4'-phosphopantetheine moiety from coenzyme A to a Ser of acyl-carrier-protein. This is Holo-[acyl-carrier-protein] synthase from Chlamydia muridarum (strain MoPn / Nigg).